A 316-amino-acid polypeptide reads, in one-letter code: L-lactate dehydrogenase (316 aa).

NAD(+)-binding positions include valine 15, aspartate 36, arginine 41, tyrosine 66, and 80–81 (GA). Residues glutamine 83, arginine 90, and 122–125 (NPVD) contribute to the substrate site. NAD(+) contacts are provided by residues 120 to 122 (ATN) and threonine 145. 150-153 (DTAR) serves as a coordination point for substrate. Arginine 155 and histidine 170 together coordinate beta-D-fructose 1,6-bisphosphate. Histidine 177 serves as the catalytic Proton acceptor. At tyrosine 222 the chain carries Phosphotyrosine. Residue threonine 231 participates in substrate binding. Residues 287–316 (DPGLSDEEREALRDSARALRDSRADLTVGT) form a disordered region. Residues 296–310 (EALRDSARALRDSRA) are compositionally biased toward basic and acidic residues.

Belongs to the LDH/MDH superfamily. LDH family. As to quaternary structure, homotetramer.

The protein resides in the cytoplasm. The enzyme catalyses (S)-lactate + NAD(+) = pyruvate + NADH + H(+). It functions in the pathway fermentation; pyruvate fermentation to lactate; (S)-lactate from pyruvate: step 1/1. Its activity is regulated as follows. Allosterically activated by fructose 1,6-bisphosphate (FBP). Catalyzes the conversion of lactate to pyruvate. The chain is L-lactate dehydrogenase from Salinibacter ruber (strain DSM 13855 / M31).